Here is a 248-residue protein sequence, read N- to C-terminus: Granzyme E (248 aa).

Residues 1-18 (MPPVLILLTLLLPLGAGA) form the signal peptide. The propeptide occupies 19–20 (EE). In terms of domain architecture, Peptidase S1 spans 21–246 (IIGGHVVKPH…FLPWISRNMK (226 aa)). Cysteines 50 and 66 form a disulfide. The active-site Charge relay system is His-65. 2 N-linked (GlcNAc...) asparagine glycosylation sites follow: Asn-68 and Asn-102. Residue Asp-109 is the Charge relay system of the active site. 2 disulfide bridges follow: Cys-143-Cys-210 and Cys-175-Cys-189. Asn-154 carries an N-linked (GlcNAc...) asparagine glycan. Catalysis depends on Ser-204, which acts as the Charge relay system. Asn-223 is a glycosylation site (N-linked (GlcNAc...) asparagine).

Belongs to the peptidase S1 family. Granzyme subfamily.

The protein localises to the cytolytic granule. Its function is as follows. This enzyme is probably necessary for target cell lysis in cell-mediated immune responses. This chain is Granzyme E (Gzme), found in Mus musculus (Mouse).